Reading from the N-terminus, the 357-residue chain is UDP-N-acetylglucosamine--N-acetylmuramyl-(pentapeptide) pyrophosphoryl-undecaprenol N-acetylglucosamine transferase (357 aa).

UDP-N-acetyl-alpha-D-glucosamine-binding positions include 7-9 (TGG), asparagine 119, arginine 159, serine 187, isoleucine 241, and glutamine 286.

The protein belongs to the glycosyltransferase 28 family. MurG subfamily.

The protein resides in the cell inner membrane. The catalysed reaction is di-trans,octa-cis-undecaprenyl diphospho-N-acetyl-alpha-D-muramoyl-L-alanyl-D-glutamyl-meso-2,6-diaminopimeloyl-D-alanyl-D-alanine + UDP-N-acetyl-alpha-D-glucosamine = di-trans,octa-cis-undecaprenyl diphospho-[N-acetyl-alpha-D-glucosaminyl-(1-&gt;4)]-N-acetyl-alpha-D-muramoyl-L-alanyl-D-glutamyl-meso-2,6-diaminopimeloyl-D-alanyl-D-alanine + UDP + H(+). It functions in the pathway cell wall biogenesis; peptidoglycan biosynthesis. Cell wall formation. Catalyzes the transfer of a GlcNAc subunit on undecaprenyl-pyrophosphoryl-MurNAc-pentapeptide (lipid intermediate I) to form undecaprenyl-pyrophosphoryl-MurNAc-(pentapeptide)GlcNAc (lipid intermediate II). This Nitrosomonas europaea (strain ATCC 19718 / CIP 103999 / KCTC 2705 / NBRC 14298) protein is UDP-N-acetylglucosamine--N-acetylmuramyl-(pentapeptide) pyrophosphoryl-undecaprenol N-acetylglucosamine transferase.